Consider the following 233-residue polypeptide: Putative T-box protein 41 (233 aa).

Positions 1–146 form a DNA-binding region, T-box; the sequence is MTVTRNGCRI…MNPHARHFLK (146 aa).

The protein resides in the nucleus. This Caenorhabditis elegans protein is Putative T-box protein 41 (tbx-41).